We begin with the raw amino-acid sequence, 225 residues long: UPF0173 metal-dependent hydrolase Pisl_0803 (225 aa).

The protein belongs to the UPF0173 family.

The polypeptide is UPF0173 metal-dependent hydrolase Pisl_0803 (Pyrobaculum islandicum (strain DSM 4184 / JCM 9189 / GEO3)).